We begin with the raw amino-acid sequence, 485 residues long: Pyruvate kinase (485 aa).

Position 33 (Arg-33) interacts with substrate. 4 residues coordinate K(+): Asn-35, Ser-37, Asp-67, and Thr-68. Residue Asn-35–His-38 participates in ATP binding. 2 residues coordinate ATP: Arg-74 and Lys-155. Glu-221 contributes to the Mg(2+) binding site. Residues Gly-244, Asp-245, and Thr-277 each contribute to the substrate site. Asp-245 lines the Mg(2+) pocket.

The protein belongs to the pyruvate kinase family. As to quaternary structure, homotetramer. Mg(2+) is required as a cofactor. K(+) serves as cofactor.

The catalysed reaction is pyruvate + ATP = phosphoenolpyruvate + ADP + H(+). It functions in the pathway carbohydrate degradation; glycolysis; pyruvate from D-glyceraldehyde 3-phosphate: step 5/5. The chain is Pyruvate kinase (pyk) from Chlamydia trachomatis serovar L2 (strain ATCC VR-902B / DSM 19102 / 434/Bu).